Here is a 445-residue protein sequence, read N- to C-terminus: Glycine--tRNA ligase (445 aa).

Residues R97 and E145 each contribute to the substrate site. Residues 177–179 (RNE), 187–192 (FRTCEF), 262–263 (EI), and 308–311 (GLTR) each bind ATP. 192–196 (FEQME) is a substrate binding site. 304 to 308 (ETSAG) is a binding site for substrate.

The protein belongs to the class-II aminoacyl-tRNA synthetase family. As to quaternary structure, homodimer.

The protein resides in the cytoplasm. It catalyses the reaction tRNA(Gly) + glycine + ATP = glycyl-tRNA(Gly) + AMP + diphosphate. Its function is as follows. Catalyzes the attachment of glycine to tRNA(Gly). The sequence is that of Glycine--tRNA ligase from Borreliella afzelii (strain PKo) (Borrelia afzelii).